The sequence spans 365 residues: Cobalt-precorrin-5B C(1)-methyltransferase (365 aa).

This sequence belongs to the CbiD family.

The catalysed reaction is Co-precorrin-5B + S-adenosyl-L-methionine = Co-precorrin-6A + S-adenosyl-L-homocysteine. It participates in cofactor biosynthesis; adenosylcobalamin biosynthesis; cob(II)yrinate a,c-diamide from sirohydrochlorin (anaerobic route): step 6/10. In terms of biological role, catalyzes the methylation of C-1 in cobalt-precorrin-5B to form cobalt-precorrin-6A. This chain is Cobalt-precorrin-5B C(1)-methyltransferase, found in Methanococcus maripaludis (strain DSM 14266 / JCM 13030 / NBRC 101832 / S2 / LL).